Reading from the N-terminus, the 441-residue chain is Thymidine phosphorylase (441 aa).

This sequence belongs to the thymidine/pyrimidine-nucleoside phosphorylase family. In terms of assembly, homodimer.

It carries out the reaction thymidine + phosphate = 2-deoxy-alpha-D-ribose 1-phosphate + thymine. Its pathway is pyrimidine metabolism; dTMP biosynthesis via salvage pathway; dTMP from thymine: step 1/2. The enzymes which catalyze the reversible phosphorolysis of pyrimidine nucleosides are involved in the degradation of these compounds and in their utilization as carbon and energy sources, or in the rescue of pyrimidine bases for nucleotide synthesis. The chain is Thymidine phosphorylase from Chromobacterium violaceum (strain ATCC 12472 / DSM 30191 / JCM 1249 / CCUG 213 / NBRC 12614 / NCIMB 9131 / NCTC 9757 / MK).